The primary structure comprises 412 residues: Putative competence-damage inducible protein (412 aa).

The protein belongs to the CinA family.

The chain is Putative competence-damage inducible protein from Bacillus thuringiensis (strain Al Hakam).